The chain runs to 152 residues: 3-dehydroquinate dehydratase (152 aa).

The Proton acceptor role is filled by Tyr-26. The substrate site is built by Asn-78, His-84, and Asp-91. His-104 acts as the Proton donor in catalysis. Substrate contacts are provided by residues 105–106 and Arg-115; that span reads LS.

Belongs to the type-II 3-dehydroquinase family. Homododecamer.

It catalyses the reaction 3-dehydroquinate = 3-dehydroshikimate + H2O. It functions in the pathway metabolic intermediate biosynthesis; chorismate biosynthesis; chorismate from D-erythrose 4-phosphate and phosphoenolpyruvate: step 3/7. Its function is as follows. Catalyzes a trans-dehydration via an enolate intermediate. The polypeptide is 3-dehydroquinate dehydratase (Idiomarina loihiensis (strain ATCC BAA-735 / DSM 15497 / L2-TR)).